The following is a 275-amino-acid chain: MTLQQQIIKALGAKPQINAEEEIRRSVDFLKSYLQTYPFIKSLVLGISGGQDSTLAGKLCQMAINELRQETGNESLQFIAVRLPYGVQADEQDCQDAIAFIQPDRVLTVNIKGAVLASEQALREAGIELSDFVRGNEKARERMKAQYSIAGMTSGVVVGTDHAAEAITGFFTKYGDGGTDINPLYRLNKRQGKQLLAALGCPEHLYKKAPTADLEDDRPSLPDEVALGVTYDNIDDYLEGKNLPEQVARTIENWYLKTEHKRRPPITVFDDFWKK.

An ATP-binding site is contributed by 46-53 (GISGGQDS). Aspartate 52 contacts Mg(2+). Arginine 140 serves as a coordination point for deamido-NAD(+). An ATP-binding site is contributed by threonine 160. Glutamate 165 contacts Mg(2+). Residues lysine 173 and aspartate 180 each contribute to the deamido-NAD(+) site. ATP is bound by residues lysine 189 and threonine 211. 260-261 (HK) provides a ligand contact to deamido-NAD(+).

The protein belongs to the NAD synthetase family. Homodimer.

The enzyme catalyses deamido-NAD(+) + NH4(+) + ATP = AMP + diphosphate + NAD(+) + H(+). It functions in the pathway cofactor biosynthesis; NAD(+) biosynthesis; NAD(+) from deamido-NAD(+) (ammonia route): step 1/1. Functionally, catalyzes the ATP-dependent amidation of deamido-NAD to form NAD. Uses ammonia as a nitrogen source. This chain is NH(3)-dependent NAD(+) synthetase, found in Escherichia coli O17:K52:H18 (strain UMN026 / ExPEC).